Consider the following 205-residue polypeptide: High frequency lysogenization protein HflD homolog (205 aa).

The protein belongs to the HflD family.

It is found in the cytoplasm. The protein resides in the cell inner membrane. The polypeptide is High frequency lysogenization protein HflD homolog (Vibrio campbellii (strain ATCC BAA-1116)).